A 1218-amino-acid polypeptide reads, in one-letter code: Coatomer subunit alpha-2 (1218 aa).

WD repeat units lie at residues 7–48 (TKSN…DRFD), 49–88 (EHDG…CLFT), 91–132 (GHLD…AVLT), 133–172 (GHNH…KKSV), 202–241 (GHDR…AWEV), 246–285 (GHMN…GIQT), 288–326 (REHD…PAFS), and 363–404 (SLNQ…AGRA). A disordered region spans residues 855–876 (MANGGDGFDAEEGEANEEDGEE). Over residues 862 to 876 (FDAEEGEANEEDGEE) the composition is skewed to acidic residues.

Oligomeric complex that consists of at least the alpha, beta, beta', gamma, delta, epsilon and zeta subunits.

It localises to the cytoplasm. Its subcellular location is the golgi apparatus membrane. The protein localises to the cytoplasmic vesicle. It is found in the COPI-coated vesicle membrane. Its function is as follows. The coatomer is a cytosolic protein complex that binds to dilysine motifs and reversibly associates with Golgi non-clathrin-coated vesicles, which further mediate biosynthetic protein transport from the ER, via the Golgi up to the trans Golgi network. Coatomer complex is required for budding from Golgi membranes, and is essential for the retrograde Golgi-to-ER transport of dilysine-tagged proteins. This chain is Coatomer subunit alpha-2, found in Oryza sativa subsp. japonica (Rice).